We begin with the raw amino-acid sequence, 194 residues long: Type II secretion system protein H (194 aa).

Positions 1-6 are cleaved as a propeptide — leader sequence; sequence MTATRG. Phenylalanine 7 carries the N-methylphenylalanine modification. A helical transmembrane segment spans residues 12 to 32; it reads ILLVLVLVSASAVAVIATFPV.

This sequence belongs to the GSP H family. In terms of assembly, type II secretion is composed of four main components: the outer membrane complex, the inner membrane complex, the cytoplasmic secretion ATPase and the periplasm-spanning pseudopilus. Interacts with core component EpsG. Post-translationally, cleaved by prepilin peptidase. Methylated by prepilin peptidase at the amino group of the N-terminal phenylalanine once the leader sequence is cleaved by prepilin peptidase.

It is found in the cell inner membrane. Functionally, component of the type II secretion system required for the energy-dependent secretion of extracellular factors such as proteases and toxins from the periplasm. Part of the pseudopilus tip complex that is critical for the recognition and binding of secretion substrates. The chain is Type II secretion system protein H (epsH) from Vibrio cholerae serotype O1 (strain ATCC 39315 / El Tor Inaba N16961).